The following is a 286-amino-acid chain: L-cysteine S-thiosulfotransferase subunit SoxA (286 aa).

Positions Met1–Ala26 are cleaved as a signal peptide. A Cytochrome c domain is found at Leu80–Ser166. Cys100, Cys103, His104, Cys138, Cys202, Cys205, and His206 together coordinate heme. Arg243 lines the substrate pocket. Cys247 serves as a coordination point for heme. The Cysteine persulfide intermediate role is filled by Cys247.

Belongs to the SoxA family. As to quaternary structure, heterodimer of SoxA and SoxX. Heme is required as a cofactor. In terms of processing, cysteine persulfide at Cys-247.

It is found in the periplasm. The catalysed reaction is L-cysteinyl-[SoxY protein] + thiosulfate + 2 Fe(III)-[cytochrome c] = S-sulfosulfanyl-L-cysteinyl-[SoxY protein] + 2 Fe(II)-[cytochrome c] + 2 H(+). The enzyme catalyses S-sulfanyl-L-cysteinyl-[SoxY protein] + thiosulfate + 2 Fe(III)-[cytochrome c] = S-(2-sulfodisulfanyl)-L-cysteinyl-[SoxY protein] + 2 Fe(II)-[cytochrome c] + 2 H(+). In terms of biological role, C-type diheme cytochrome, which is part of the SoxAX cytochrome complex involved in sulfur oxidation. The SoxAX complex catalyzes the formation of a heterodisulfide bond between the conserved cysteine residue on a sulfur carrier SoxYZ complex subunit SoxY and thiosulfate or other inorganic sulfur substrates. This leads to the liberation of two electrons, which may be transferred from the SoxAX complex to another cytochrome c that then channels them into the respiratory electron transport chain. Some electrons may be used for reductive CO(2) fixation. The sequence is that of L-cysteine S-thiosulfotransferase subunit SoxA from Pseudaminobacter salicylatoxidans.